Consider the following 256-residue polypeptide: 5-keto-4-deoxy-D-glucarate aldolase (256 aa).

H50 acts as the Proton acceptor in catalysis. Q151 is a binding site for substrate. A Mg(2+)-binding site is contributed by E153. 2 residues coordinate substrate: S178 and D179. Residue D179 coordinates Mg(2+).

The protein belongs to the HpcH/HpaI aldolase family. KDGluc aldolase subfamily. In terms of assembly, homohexamer; trimer of dimers. Mg(2+) is required as a cofactor.

It catalyses the reaction 5-dehydro-4-deoxy-D-glucarate = 2-hydroxy-3-oxopropanoate + pyruvate. It carries out the reaction 2-dehydro-3-deoxy-D-glucarate = 2-hydroxy-3-oxopropanoate + pyruvate. The protein operates within carbohydrate acid metabolism; galactarate degradation; D-glycerate from galactarate: step 2/3. Catalyzes the reversible retro-aldol cleavage of both 5-keto-4-deoxy-D-glucarate and 2-keto-3-deoxy-D-glucarate to pyruvate and tartronic semialdehyde. In Escherichia coli O157:H7 (strain EC4115 / EHEC), this protein is 5-keto-4-deoxy-D-glucarate aldolase.